The primary structure comprises 383 residues: 6-hydroxynicotinate 3-monooxygenase (383 aa).

A signal peptide spans 1–26 (MQGKPRIAVIGAGLGGTAGAALMARA). FAD-binding positions include G15, 34 to 35 (EQ), H47, R108, and L130. The active-site Proton acceptor is the H47. The Proton acceptor role is filled by Y214. Residues D293 and 306-307 (AA) contribute to the FAD site.

It belongs to the 6-hydroxynicotinate 3-monooxygenase family. Monomer. It depends on FAD as a cofactor.

The catalysed reaction is 6-hydroxynicotinate + NADH + O2 + 2 H(+) = 2,5-dihydroxypyridine + CO2 + NAD(+) + H2O. It participates in cofactor degradation; nicotinate degradation. With respect to regulation, competitively inhibited by 6-hydroxynicotinaldehyde. In terms of biological role, flavin-dependent monooxygenase (FMO) that catalyzes the decarboxylative hydroxylation of 6-hydroxynicotinic acid (6-HNA) to 2,5-dihydroxypyridine (2,5-DHP) with concomitant oxidation of NADH, a step in the aerobic nicotinate degradation pathway. Is also active on the non-natural substrate 5-chloro-6-hydroxynicotinate, and is much less efficient on the substrate analog 4-hydroxybenzoate. This chain is 6-hydroxynicotinate 3-monooxygenase, found in Bordetella bronchiseptica (strain ATCC BAA-588 / NCTC 13252 / RB50) (Alcaligenes bronchisepticus).